The primary structure comprises 124 residues: Putative outer membrane protein TC_0858 (124 aa).

Residues 1–31 (MGKTKKRKQSITLIEMMVVITLIGIISGALA) form the signal peptide.

The protein resides in the cell outer membrane. The protein is Putative outer membrane protein TC_0858 of Chlamydia muridarum (strain MoPn / Nigg).